A 1029-amino-acid polypeptide reads, in one-letter code: E3 ubiquitin-protein ligase UPL6 (1029 aa).

The interval 1-20 (MFFSGDPSTRKRVDLGGRST) is disordered. Over residues 8-20 (STRKRVDLGGRST) the composition is skewed to basic and acidic residues. Residues 45–74 (QNSAALKIQKFFRGRRSMAIERSKVRHDFC) form the IQ domain. Residues 688 to 1029 (SEDDLRSSIR…ISAEAGFDLS (342 aa)) enclose the HECT domain. The active-site Glycyl thioester intermediate is the cysteine 997.

It belongs to the UPL family.

It carries out the reaction S-ubiquitinyl-[E2 ubiquitin-conjugating enzyme]-L-cysteine + [acceptor protein]-L-lysine = [E2 ubiquitin-conjugating enzyme]-L-cysteine + N(6)-ubiquitinyl-[acceptor protein]-L-lysine.. It functions in the pathway protein modification; protein ubiquitination. In terms of biological role, probable E3 ubiquitin-protein ligase which mediates ubiquitination and subsequent proteasomal degradation of target proteins. This is E3 ubiquitin-protein ligase UPL6 (UPL6) from Arabidopsis thaliana (Mouse-ear cress).